The following is a 126-amino-acid chain: Holo-[acyl-carrier-protein] synthase (126 aa).

Asp9 and Glu58 together coordinate Mg(2+).

Belongs to the P-Pant transferase superfamily. AcpS family. Mg(2+) serves as cofactor.

The protein localises to the cytoplasm. The enzyme catalyses apo-[ACP] + CoA = holo-[ACP] + adenosine 3',5'-bisphosphate + H(+). Functionally, transfers the 4'-phosphopantetheine moiety from coenzyme A to a Ser of acyl-carrier-protein. This chain is Holo-[acyl-carrier-protein] synthase, found in Vibrio vulnificus (strain CMCP6).